Reading from the N-terminus, the 152-residue chain is Superoxide dismutase [Cu-Zn] 1 (152 aa).

Residues histidine 45, histidine 47, and histidine 62 each contribute to the Cu cation site. A disulfide bridge links cysteine 56 with cysteine 145. Zn(2+) contacts are provided by histidine 62, histidine 70, histidine 79, and aspartate 82. Cu cation is bound at residue histidine 119.

The protein belongs to the Cu-Zn superoxide dismutase family. Homodimer. It depends on Cu cation as a cofactor. Zn(2+) serves as cofactor.

The protein localises to the cytoplasm. The enzyme catalyses 2 superoxide + 2 H(+) = H2O2 + O2. In terms of biological role, destroys radicals which are normally produced within the cells and which are toxic to biological systems. The polypeptide is Superoxide dismutase [Cu-Zn] 1 (SODCC.1) (Solanum lycopersicum (Tomato)).